Consider the following 146-residue polypeptide: Angiogenin (146 aa).

The first 24 residues, 1 to 24 (MVMGLGLFLLVFMLGLGLTLPTLA), serve as a signal peptide directing secretion. A Pyrrolidone carboxylic acid modification is found at Gln-25. Residue His-37 is the Proton acceptor of the active site. Arg-45 lines the tRNA pocket. 3 disulfide bridges follow: Cys-50/Cys-105, Cys-63/Cys-116, and Cys-81/Cys-131. Positions 55-59 (RRRHL) match the Nucleolar localization signal motif. TRNA is bound by residues Cys-105 and Ile-127. His-138 functions as the Proton donor in the catalytic mechanism.

It belongs to the pancreatic ribonuclease family. Homodimer. Interacts with RNH1; inhibiting ANG ribonuclease activity. Interacts with PCNA.

The protein resides in the secreted. It is found in the nucleus. The protein localises to the nucleolus. Its subcellular location is the cytoplasm. It localises to the stress granule. With respect to regulation, has weak tRNA ribonuclease activity by itself due to partial autoinhibition by its C-terminus, which folds into a short alpha-helix that partially occludes the substrate-binding site. In absence of stress, the ribonuclease activity is inhibited by RNH1 in the cytoplasm. In response to stress, dissociates from RNH1 in the cytoplasm and associates with cytoplasmic ribosomes with vacant A-sites: ribosomes directly activate the tRNA ribonuclease activity of ANG by refolding the C-terminal alpha-helix. In response to stress, the angiogenic activity of ANG is inhibited by RNH1 in the nucleus. Functionally, secreted ribonuclease that can either promote or restrict cell proliferation of target cells, depending on the context. Endocytosed in target cells via its receptor PLXNB2 and translocates to the cytoplasm or nucleus. Under stress conditions, localizes to the cytoplasm and promotes the assembly of stress granules (SGs): specifically cleaves a subset of tRNAs within anticodon loops to produce tRNA-derived stress-induced fragments (tiRNAs), resulting in translation repression and inhibition of cell proliferation. tiRNas also prevent formation of apoptosome, thereby promoting cell survival. Preferentially cleaves RNAs between a pyrimidine and an adenosine residue, suggesting that it cleaves the anticodon loop of tRNA(Ala) (32-UUAGCAU-38) after positions 33 and 36. Cleaves a subset of tRNAs, including tRNA(Ala), tRNA(Glu), tRNA(Gly), tRNA(Lys), tRNA(Val), tRNA(His), tRNA(Asp) and tRNA(Sec). Under growth conditions and in differentiated cells, translocates to the nucleus and stimulates ribosomal RNA (rRNA) transcription, including that containing the initiation site sequences of 45S rRNA, thereby promoting cell growth and proliferation. Angiogenin induces vascularization of normal and malignant tissues via its ability to promote rRNA transcription. Involved in hematopoietic stem and progenitor cell (HSPC) growth and survival by promoting rRNA transcription in growth conditions and inhibiting translation in response to stress, respectively. Mediates the crosstalk between myeloid and intestinal epithelial cells to protect the intestinal epithelial barrier integrity: secreted by myeloid cells and promotes intestinal epithelial cells proliferation and survival. Also mediates osteoclast-endothelial cell crosstalk in growing bone: produced by osteoclasts and protects the neighboring vascular cells against senescence by promoting rRNA transcription. In Papio hamadryas (Hamadryas baboon), this protein is Angiogenin (ANG).